A 972-amino-acid chain; its full sequence is MDTDLYDEFGNYIGPELDSDEDDDELGRETKDLDEMDDDDDDDDIGDHDDDHPGMEVVLHEDKKYYPTAEEVYGPEVETIVQEEDTQPLTEPIIKPVKTKKFTLMEQTLPVTVYEMDFLADLMDNSELIRNVTLCGHLHHGKTCFVDCLIEQTHPEIRKRYDQDLCYTDILFTEQERGVGIKSTPVTVVLPDTKGKSYLFNIMDTPGHVNFSDEVTAGLRISDGVVLFIDAAEGVMLNTERLIKHAVQERLAVTVCINKIDRLILELKLPPTDAYYKLRHIVDEVNGLISMYSTDENLILSPLLGNVCFSSSQYSICFTLGSFAKIYADTFGDINYQEFAKRLWGDIYFNPKTRKFTKKAPTSSSQRSFVEFILEPLYKILAQVVGDVDTSLPRTLDELGIHLTKEELKLNIRPLLRLVCKKFFGEFTGFVDMCVQHIPSPKVGAKPKIEHTYTGGVDSDLGEAMSDCDPDGPLMCHTTKMYSTDDGVQFHAFGRVLSGTIHAGQPVKVLGENYTLEDEEDSQICTVGRLWISVARYHIEVNRVPAGNWVLIEGVDQPIVKTATITEPRGNEEAQIFRPLKFNTTSVIKIAVEPVNPSELPKMLDGLRKVNKSYPSLTTKVEESGEHVILGTGELYLDCVMHDLPKMYSEIDIKVADPVVTFCETVVETSSLKCFAETPNKKNKITMIAEPLEKGLAEDIENEVVQITWNRKKLGEFFQTKYDWDLLAARSIWAFGPDATGPNILVDDTLPSEVDKALLGSVKDSIVQGFQWGTREGPLCDELIRNVKFKILDAVVAQEPLHRGGGQIIPTARRVVYSAFLMATPRLMEPYYFVEVQAPADCVSAVYTVLARRRGHVTQDAPIPGSPLYTIKAFIPAIDSFGFETDLRTHTQGQAFSLSVFHHWQIVPGDPLDKSIVIRPLEPQPAPHLAREFMIKTRRRKGLSEDVSISKFFDDPMLLELAKQDVVLNYPM.

An N-acetylmethionine modification is found at M1. The tract at residues 1 to 54 is disordered; the sequence is MDTDLYDEFGNYIGPELDSDEDDDELGRETKDLDEMDDDDDDDDIGDHDDDHPG. 2 stretches are compositionally biased toward acidic residues: residues 17-26 and 34-48; these read LDSDEDDDEL and DEMDDDDDDDDIGDH. S19 bears the Phosphoserine mark. K64 is covalently cross-linked (Glycyl lysine isopeptide (Lys-Gly) (interchain with G-Cter in SUMO1); alternate). K64 participates in a covalent cross-link: Glycyl lysine isopeptide (Lys-Gly) (interchain with G-Cter in SUMO2); alternate. T86 is subject to Phosphothreonine. The region spanning 127–409 is the tr-type G domain; sequence ELIRNVTLCG…GIHLTKEELK (283 aa). GTP contacts are provided by residues 136–143, 204–208, and 258–261; these read GHLHHGKT, DTPGH, and NKID.

Belongs to the TRAFAC class translation factor GTPase superfamily. Classic translation factor GTPase family. EF-G/EF-2 subfamily. In terms of assembly, component of the U5 snRNP and the U4/U6-U5 tri-snRNP complex, a building block of the spliceosome. The U4/U6-U5 tri-snRNP complex is composed of the U4, U6 and U5 snRNAs and at least PRPF3, PRPF4, PRPF6, PRPF8, PRPF31, SNRNP200, TXNL4A, SNRNP40, DDX23, CD2BP2, PPIH, SNU13, EFTUD2, SART1 and USP39. Component of the pre-catalytic, catalytic and post-catalytic spliceosome complexes. Component of the minor spliceosome, which splices U12-type introns. Within this complex, interacts with CRIPT. Interacts with ERBB4 and PRPF8. Interacts with PIH1D1. Interacts with RPAP3 and URI1 in a ZNHIT2-dependent manner. Interacts with NRDE2. Interacts with FAM50A. Interacts with UBL5.

The protein resides in the nucleus. Its function is as follows. Required for pre-mRNA splicing as component of the spliceosome, including pre-catalytic, catalytic and post-catalytic spliceosomal complexes. Component of the U5 snRNP and the U4/U6-U5 tri-snRNP complex, a building block of the spliceosome. As a component of the minor spliceosome, involved in the splicing of U12-type introns in pre-mRNAs. The polypeptide is 116 kDa U5 small nuclear ribonucleoprotein component (EFTUD2) (Pongo abelii (Sumatran orangutan)).